Consider the following 359-residue polypeptide: Phospho-N-acetylmuramoyl-pentapeptide-transferase (359 aa).

The next 10 membrane-spanning stretches (helical) occupy residues 3–23 (QILI…PALI), 55–75 (VAII…GLAF), 80–100 (ISAS…VGFL), 117–137 (TAKT…ALGF), 156–176 (IATV…VVSA), 187–207 (LDGL…LITF), 231–251 (LAIV…WNAA), 255–275 (IFMG…ISVT), 280–300 (ILAV…VLQI), and 334–354 (FWLL…GEWL).

Belongs to the glycosyltransferase 4 family. MraY subfamily. Mg(2+) is required as a cofactor.

It localises to the cell membrane. It catalyses the reaction UDP-N-acetyl-alpha-D-muramoyl-L-alanyl-gamma-D-glutamyl-meso-2,6-diaminopimeloyl-D-alanyl-D-alanine + di-trans,octa-cis-undecaprenyl phosphate = di-trans,octa-cis-undecaprenyl diphospho-N-acetyl-alpha-D-muramoyl-L-alanyl-D-glutamyl-meso-2,6-diaminopimeloyl-D-alanyl-D-alanine + UMP. It functions in the pathway cell wall biogenesis; peptidoglycan biosynthesis. Functionally, catalyzes the initial step of the lipid cycle reactions in the biosynthesis of the cell wall peptidoglycan: transfers peptidoglycan precursor phospho-MurNAc-pentapeptide from UDP-MurNAc-pentapeptide onto the lipid carrier undecaprenyl phosphate, yielding undecaprenyl-pyrophosphoryl-MurNAc-pentapeptide, known as lipid I. In Mycolicibacterium paratuberculosis (strain ATCC BAA-968 / K-10) (Mycobacterium paratuberculosis), this protein is Phospho-N-acetylmuramoyl-pentapeptide-transferase.